Reading from the N-terminus, the 283-residue chain is Protoheme IX farnesyltransferase (283 aa).

The next 9 membrane-spanning stretches (helical) occupy residues 6 to 26 (LLLTKPGIILGNLVTVMAGFL), 35 to 55 (FGLFFSTILGLAFIMASGCVF), 85 to 105 (AIVFGLALAIVGAIILYFYTN), 106 to 126 (LLTLVIAELGFIIYVFFYSIW), 131 to 151 (VYGTAIGSLAGAVPPLVGYCA), 160 to 180 (AFILFAMMVFWQMPHFFSIAI), 207 to 227 (ILLYIIIFTLTSSLLTFFHFT), 230 to 250 (LYLILTIGLGLTWLLMGLRGL), and 262 to 282 (MFRFSLVIISVLSLTIPFDLV).

The protein belongs to the UbiA prenyltransferase family. Protoheme IX farnesyltransferase subfamily.

It is found in the cell inner membrane. The catalysed reaction is heme b + (2E,6E)-farnesyl diphosphate + H2O = Fe(II)-heme o + diphosphate. Its pathway is porphyrin-containing compound metabolism; heme O biosynthesis; heme O from protoheme: step 1/1. Functionally, converts heme B (protoheme IX) to heme O by substitution of the vinyl group on carbon 2 of heme B porphyrin ring with a hydroxyethyl farnesyl side group. This chain is Protoheme IX farnesyltransferase, found in Protochlamydia amoebophila (strain UWE25).